The following is a 200-amino-acid chain: Recombination protein RecR (200 aa).

The C4-type zinc-finger motif lies at 59–74 (CSTCGNIDSQNPCTVC). A Toprim domain is found at 82 to 177 (SIIVVVADVA…KVTRLAHGVP (96 aa)).

Belongs to the RecR family.

In terms of biological role, may play a role in DNA repair. It seems to be involved in an RecBC-independent recombinational process of DNA repair. It may act with RecF and RecO. The chain is Recombination protein RecR from Rhodopseudomonas palustris (strain ATCC BAA-98 / CGA009).